Here is a 350-residue protein sequence, read N- to C-terminus: Enoyl-[acyl-carrier-protein] reductase, mitochondrial (350 aa).

The N-terminal 14 residues, 1 to 14 (MNSTRNIISLVRRY), are a transit peptide targeting the mitochondrion. Tyr-69 serves as the catalytic Proton donor. Residues Asn-143, 169 to 172 (NSMV), 192 to 194 (RDG), 261 to 264 (YGGM), 286 to 288 (FWL), and Lys-343 contribute to the NADP(+) site.

Belongs to the zinc-containing alcohol dehydrogenase family. Quinone oxidoreductase subfamily. Homodimer.

It is found in the mitochondrion. The enzyme catalyses a 2,3-saturated acyl-[ACP] + NADP(+) = a (2E)-enoyl-[ACP] + NADPH + H(+). In terms of biological role, catalyzes the NADPH-dependent reduction of trans-2-enoyl thioesters in mitochondrial fatty acid synthesis (fatty acid synthesis type II). Fatty acid chain elongation in mitochondria uses acyl carrier protein (ACP) as an acyl group carrier, but the enzyme accepts both ACP and CoA thioesters as substrates in vitro. The polypeptide is Enoyl-[acyl-carrier-protein] reductase, mitochondrial (mecr) (Dictyostelium discoideum (Social amoeba)).